Here is a 325-residue protein sequence, read N- to C-terminus: 5-dehydro-2-deoxygluconokinase (325 aa).

This sequence belongs to the carbohydrate kinase PfkB family.

The enzyme catalyses 5-dehydro-2-deoxy-D-gluconate + ATP = 6-phospho-5-dehydro-2-deoxy-D-gluconate + ADP + H(+). Its pathway is polyol metabolism; myo-inositol degradation into acetyl-CoA; acetyl-CoA from myo-inositol: step 5/7. In terms of biological role, catalyzes the phosphorylation of 5-dehydro-2-deoxy-D-gluconate (2-deoxy-5-keto-D-gluconate or DKG) to 6-phospho-5-dehydro-2-deoxy-D-gluconate (DKGP). The polypeptide is 5-dehydro-2-deoxygluconokinase (Listeria innocua serovar 6a (strain ATCC BAA-680 / CLIP 11262)).